A 911-amino-acid chain; its full sequence is DNA replication licensing factor mcm4 (911 aa).

A disordered region spans residues 1-132; the sequence is MSSSQQSGRA…RPGVSTPSSL (132 aa). Phosphoserine is present on residues Ser-37, Ser-38, and Ser-41. Positions 42–56 are enriched in low complexity; that stretch reads TRLTTPRTTARTPLA. Over residues 63 to 84 the composition is skewed to polar residues; that stretch reads ESSSPGPNIPQSSRSHLLSQRN. Position 92 is a phosphoserine (Ser-92). An MCM domain is found at 493–702; that stretch reads IYDILSRSLA…LDRKLANHIV (210 aa). 545–552 serves as a coordination point for ATP; the sequence is GDPSTSKS. An Arginine finger motif is present at residues 677–680; that stretch reads SRFD.

This sequence belongs to the MCM family. Component of the mcm2-7 complex. The complex forms a toroidal hexameric ring with the proposed subunit order mcm2-mcm6-mcm4-mcm7-mcm3-mcm5. The heterodimers of mcm4/mcm6 and mcm3/mcm5 interact with mcm2 and mcm7.

It is found in the nucleus. It catalyses the reaction ATP + H2O = ADP + phosphate + H(+). In terms of biological role, acts as a component of the mcm2-7 complex (mcm complex) which is the putative replicative helicase essential for 'once per cell cycle' DNA replication initiation and elongation in eukaryotic cells. The active ATPase sites in the mcm2-7 ring are formed through the interaction surfaces of two neighboring subunits such that a critical structure of a conserved arginine finger motif is provided in trans relative to the ATP-binding site of the Walker A box of the adjacent subunit. The six ATPase active sites, however, are likely to contribute differentially to the complex helicase activity. Required for S phase execution. The polypeptide is DNA replication licensing factor mcm4 (mcm4) (Schizosaccharomyces pombe (strain 972 / ATCC 24843) (Fission yeast)).